A 245-amino-acid polypeptide reads, in one-letter code: 8-amino-3,8-dideoxy-manno-octulosonate cytidylyltransferase (245 aa).

The protein belongs to the KdsB family.

The protein localises to the cytoplasm. It carries out the reaction 8-amino-3,8-dideoxy-alpha-D-manno-octulosonate + CTP = CMP-8-amino-3,8-dideoxy-alpha-D-manno-oct-2-ulosonate + diphosphate. It participates in bacterial outer membrane biogenesis; lipopolysaccharide biosynthesis. Activates KDO8N (a required 8-carbon sugar) for incorporation into bacterial lipopolysaccharide in the Shewanella genus. This is 8-amino-3,8-dideoxy-manno-octulosonate cytidylyltransferase from Shewanella sp. (strain W3-18-1).